Reading from the N-terminus, the 1374-residue chain is DNA-directed RNA polymerase subunit beta' (1374 aa).

The interval 1–47 is disordered; sequence MTSTSPKSRKPSTKTTKSKSKSKSKSKAAKAAAAGASPALARTPPQF. The span at 7–28 shows a compositional bias: basic residues; sequence KSRKPSTKTTKSKSKSKSKSKA. Residues 29 to 39 show a composition bias toward low complexity; sequence AKAAAAGASPA. Zn(2+) contacts are provided by Cys-258, Cys-325, Cys-332, and Cys-335. Residues 1344–1374 are disordered; that stretch reads RPTGENELEEEQLPDPSALEGLQQEGLLTEE. A compositionally biased stretch (low complexity) spans 1362-1374; sequence LEGLQQEGLLTEE.

It belongs to the RNA polymerase beta' chain family. RpoC2 subfamily. As to quaternary structure, in cyanobacteria the RNAP catalytic core is composed of 2 alpha, 1 beta, 1 beta', 1 gamma and 1 omega subunit. When a sigma factor is associated with the core the holoenzyme is formed, which can initiate transcription. It depends on Zn(2+) as a cofactor.

It catalyses the reaction RNA(n) + a ribonucleoside 5'-triphosphate = RNA(n+1) + diphosphate. In terms of biological role, DNA-dependent RNA polymerase catalyzes the transcription of DNA into RNA using the four ribonucleoside triphosphates as substrates. The protein is DNA-directed RNA polymerase subunit beta' of Prochlorococcus marinus (strain MIT 9313).